Reading from the N-terminus, the 380-residue chain is 1-deoxy-D-xylulose 5-phosphate reductoisomerase (380 aa).

Residues Thr10, Gly11, Ser12, Ile13, Gly36, Arg37, Asn38, and Asn120 each contribute to the NADPH site. Lys121 serves as a coordination point for 1-deoxy-D-xylulose 5-phosphate. Glu122 is an NADPH binding site. Position 146 (Asp146) interacts with Mn(2+). 1-deoxy-D-xylulose 5-phosphate-binding residues include Ser147, Glu148, Ser172, and His195. Glu148 is a Mn(2+) binding site. Residue Gly201 coordinates NADPH. Ser208, Asn213, Lys214, and Glu217 together coordinate 1-deoxy-D-xylulose 5-phosphate. Glu217 contacts Mn(2+).

This sequence belongs to the DXR family. The cofactor is Mg(2+). Mn(2+) is required as a cofactor.

The enzyme catalyses 2-C-methyl-D-erythritol 4-phosphate + NADP(+) = 1-deoxy-D-xylulose 5-phosphate + NADPH + H(+). It participates in isoprenoid biosynthesis; isopentenyl diphosphate biosynthesis via DXP pathway; isopentenyl diphosphate from 1-deoxy-D-xylulose 5-phosphate: step 1/6. In terms of biological role, catalyzes the NADPH-dependent rearrangement and reduction of 1-deoxy-D-xylulose-5-phosphate (DXP) to 2-C-methyl-D-erythritol 4-phosphate (MEP). The sequence is that of 1-deoxy-D-xylulose 5-phosphate reductoisomerase from Listeria innocua serovar 6a (strain ATCC BAA-680 / CLIP 11262).